Consider the following 757-residue polypeptide: Relaxin receptor 1 (757 aa).

Residues 1-409 (MTSGSVFFYI…ENLLASIIQR (409 aa)) lie on the Extracellular side of the membrane. Residues 26–63 (KCSLGYFPCGNITKCLPQLLHCNGVDDCGNQADEDNCG) enclose the LDL-receptor class A domain. Disulfide bonds link cysteine 27-cysteine 40, cysteine 34-cysteine 53, and cysteine 47-cysteine 62. The N-linked (GlcNAc...) asparagine glycan is linked to asparagine 36. Leucine 45, asparagine 48, valine 50, aspartate 52, aspartate 58, and glutamate 59 together coordinate Ca(2+). An LRRNT domain is found at 91–127 (ETPECLVGSVPVQCLCQGLELDCDETNLRAVPSVSSN). The N-linked (GlcNAc...) asparagine glycan is linked to asparagine 127. 9 LRR repeats span residues 151–172 (DLQK…AFRG), 175–196 (SLTK…VFED), 199–220 (RLEW…TFYG), 223–244 (SLIL…PLCQ), 248–269 (RLHW…TFIS), 272–293 (NLTV…TFAP), 296–317 (KLDE…IFKD), 320–341 (ELSQ…QFDY), and 344–365 (KLKS…MFRP). N-linked (GlcNAc...) asparagine glycosylation is found at asparagine 264 and asparagine 272. Asparagine 325 carries an N-linked (GlcNAc...) asparagine glycan. Asparagine 368 carries N-linked (GlcNAc...) asparagine glycosylation. Residues 410-430 (VFVWVVSAVTCFGNIFVICMR) form a helical membrane-spanning segment. At 431–443 (PYIRSENKLYAMS) the chain is on the cytoplasmic side. The helical transmembrane segment at 444-464 (IISLCCADCLMGIYLFVIGGF) threads the bilayer. The Extracellular segment spans residues 465–486 (DLKFRGEYNKHAQLWMESTHCQ). Cysteine 485 and cysteine 563 form a disulfide bridge. The helical transmembrane segment at 487–507 (LVGSLAILSTEVSVLLLTFLT) threads the bilayer. Residues 508 to 527 (LEKYICIVYPFRCVRPGKCR) are Cytoplasmic-facing. A helical transmembrane segment spans residues 528–548 (TITVLILIWITGFIVAFIPLS). Topologically, residues 549–577 (NKEFFKNYYGTNGVCFPLHSEDTESIGAQ) are extracellular. Residues 578 to 598 (IYSVAIFLGINLAAFIIIVFS) form a helical membrane-spanning segment. Residues 599–629 (YGSMFYSVHQSAITATEIRNQVKKEMILAKR) are Cytoplasmic-facing. The chain crosses the membrane as a helical span at residues 630–650 (FFFIVFTDALCWIPIFVVKFL). Position 651 (serine 651) is a topological domain, extracellular. Residues 652–672 (LLQVEIPGTITSWVVIFILPI) traverse the membrane as a helical segment. The Cytoplasmic segment spans residues 673 to 757 (NSALNPILYT…SQSTRLNSYS (85 aa)).

It belongs to the G-protein coupled receptor 1 family. In terms of assembly, interacts with C1QTNF8. As to expression, expressed in the brain, kidney, testis, placenta, uterus, ovary, adrenal, prostate, skin and heart. Not detected in spleen.

Its subcellular location is the cell membrane. In terms of biological role, receptor for relaxins. The activity of this receptor is mediated by G proteins leading to stimulation of adenylate cyclase and an increase of cAMP. Binding of the ligand may also activate a tyrosine kinase pathway that inhibits the activity of a phosphodiesterase that degrades cAMP. This chain is Relaxin receptor 1 (RXFP1), found in Homo sapiens (Human).